Reading from the N-terminus, the 61-residue chain is Large ribosomal subunit protein eL24 (61 aa).

Residues C7, C10, C33, and C37 each coordinate Zn(2+). The C4-type zinc finger occupies 7–37 (CSFCGKEIPPATGLMYIRNDGSILWFCSNKC).

It belongs to the eukaryotic ribosomal protein eL24 family. As to quaternary structure, part of the 50S ribosomal subunit. Forms a cluster with proteins L3 and L14. Zn(2+) serves as cofactor.

In terms of biological role, binds to the 23S rRNA. The polypeptide is Large ribosomal subunit protein eL24 (Sulfurisphaera tokodaii (strain DSM 16993 / JCM 10545 / NBRC 100140 / 7) (Sulfolobus tokodaii)).